A 411-amino-acid chain; its full sequence is Heparan-sulfate 6-O-sulfotransferase 1 (411 aa).

The Cytoplasmic segment spans residues 1–19 (MRRRRAGGRTMVERASKFV). A helical; Signal-anchor for type II membrane protein membrane pass occupies residues 20-37 (LVVAGSACFMLILYQYAG). The Lumenal portion of the chain corresponds to 38–411 (PGLSLGAPGG…DYMSHIIEKW (374 aa)). 93-101 (HIQKTGGTT) is a binding site for 3'-phosphoadenylyl sulfate. Substrate is bound by residues 123–124 (KK), arginine 140, tryptophan 145, and histidine 150. Histidine 150 functions as the Proton acceptor in the catalytic mechanism. Positions 185 and 193 each coordinate 3'-phosphoadenylyl sulfate. The substrate site is built by histidine 197 and tryptophan 204. A glycan (N-linked (GlcNAc...) asparagine) is linked at asparagine 264. Residue 317-319 (MQY) participates in 3'-phosphoadenylyl sulfate binding. The N-linked (GlcNAc...) asparagine glycan is linked to asparagine 320. Residue 323 to 324 (RA) participates in 3'-phosphoadenylyl sulfate binding. Positions 352–386 (KDLFQQRYQYKRQLERREQRLRNREERLLHRSKEA) form a coiled coil. The segment at 380-401 (LHRSKEALPREDPEEPGRVPTE) is disordered.

The protein belongs to the sulfotransferase 6 family. In terms of processing, N-glycosylated. As to expression, expressed in fetal brain and liver.

The protein resides in the membrane. The catalysed reaction is alpha-D-glucosaminyl-[heparan sulfate](n) + 3'-phosphoadenylyl sulfate = 6-sulfo-alpha-D-glucosaminyl-[heparan sulfate](n) + adenosine 3',5'-bisphosphate + H(+). In terms of biological role, 6-O-sulfation enzyme which catalyzes the transfer of sulfate from 3'-phosphoadenosine 5'-phosphosulfate (PAPS) to position 6 of the N-sulfoglucosamine residue (GlcNS) of heparan sulfate. Critical for normal neuronal development where it may play a role in neuron branching. May also play a role in limb development. May prefer iduronic acid. The sequence is that of Heparan-sulfate 6-O-sulfotransferase 1 from Mus musculus (Mouse).